Here is a 286-residue protein sequence, read N- to C-terminus: Beta-lactamase SHV-34 (286 aa).

A signal peptide spans 1–21; it reads MRYFRLCIISLLATLPLAVHA. Ser66 acts as the Acyl-ester intermediate in catalysis. Cys73 and Cys119 are disulfide-bonded. Catalysis depends on Glu164, which acts as the Proton acceptor. 230-232 contributes to the substrate binding site; sequence KTG.

This sequence belongs to the class-A beta-lactamase family.

The catalysed reaction is a beta-lactam + H2O = a substituted beta-amino acid. Its function is as follows. Hydrolyzes ceftazidime and cefotaxime. The sequence is that of Beta-lactamase SHV-34 (bla) from Escherichia coli.